The primary structure comprises 251 residues: Cell division protein ZapD (251 aa).

This sequence belongs to the ZapD family. Interacts with FtsZ.

The protein resides in the cytoplasm. In terms of biological role, cell division factor that enhances FtsZ-ring assembly. Directly interacts with FtsZ and promotes bundling of FtsZ protofilaments, with a reduction in FtsZ GTPase activity. The chain is Cell division protein ZapD from Burkholderia ambifaria (strain MC40-6).